The primary structure comprises 93 residues: DNA/RNA-binding protein Alba (93 aa).

Lys11 bears the N6-acetyllysine mark.

The protein belongs to the histone-like Alba family. Post-translationally, acetylated. Acetylation at Lys-11 decreases DNA-binding affinity.

It localises to the cytoplasm. Its subcellular location is the chromosome. Its function is as follows. Binds double-stranded DNA tightly but without sequence specificity. Involved in DNA compaction. This chain is DNA/RNA-binding protein Alba, found in Pyrococcus abyssi (strain GE5 / Orsay).